The primary structure comprises 311 residues: Acetyl-coenzyme A carboxylase carboxyl transferase subunit alpha (311 aa).

One can recognise a CoA carboxyltransferase C-terminal domain in the interval 36–286; it reads NLEKEVAKVY…ASYFVSKLEK (251 aa).

The protein belongs to the AccA family. In terms of assembly, acetyl-CoA carboxylase is a heterohexamer composed of biotin carboxyl carrier protein (AccB), biotin carboxylase (AccC) and two subunits each of ACCase subunit alpha (AccA) and ACCase subunit beta (AccD).

It localises to the cytoplasm. The enzyme catalyses N(6)-carboxybiotinyl-L-lysyl-[protein] + acetyl-CoA = N(6)-biotinyl-L-lysyl-[protein] + malonyl-CoA. It functions in the pathway lipid metabolism; malonyl-CoA biosynthesis; malonyl-CoA from acetyl-CoA: step 1/1. Its function is as follows. Component of the acetyl coenzyme A carboxylase (ACC) complex. First, biotin carboxylase catalyzes the carboxylation of biotin on its carrier protein (BCCP) and then the CO(2) group is transferred by the carboxyltransferase to acetyl-CoA to form malonyl-CoA. The polypeptide is Acetyl-coenzyme A carboxylase carboxyl transferase subunit alpha (Campylobacter curvus (strain 525.92)).